Consider the following 557-residue polypeptide: Vanadium-dependent bromoperoxidase (557 aa).

Position 1 is a pyrrolidone carboxylic acid (Gln-1). The disordered stretch occupies residues 1–22 (QTCSTSDDADDPTPPNERDDEA). A disulfide bond links Cys-77 and Cys-86. Vanadate contacts are provided by Lys-341 and Arg-349. The active site involves His-411. Residues Ser-416, Gly-417, and His-418 each contribute to the vanadate site. His-418 is an active-site residue. Cys-441 and Cys-462 are disulfide-bonded. Vanadate-binding residues include Arg-480 and His-486. Cys-544 and Cys-555 are joined by a disulfide.

The protein belongs to the vanadium-dependent haloperoxidase family. In terms of assembly, homodimer; disulfide-linked. The cofactor is vanadate.

It catalyses the reaction RH + Br(-) + H2O2 = RBr + 2 H2O.. In terms of biological role, catalyzes the halogenation of organic substrates in the presence of hydrogen peroxide. The protein is Vanadium-dependent bromoperoxidase of Ascophyllum nodosum (Knotted wrack).